A 164-amino-acid chain; its full sequence is Phosphopantetheine adenylyltransferase (164 aa).

Position 14 (Thr-14) interacts with substrate. Residues 14–15 (TF) and His-22 contribute to the ATP site. Substrate-binding residues include Lys-46, Leu-78, and Arg-92. ATP is bound by residues 93–95 (GLR), Glu-103, and 128–134 (HAFISST).

It belongs to the bacterial CoaD family. Homohexamer. Mg(2+) serves as cofactor.

Its subcellular location is the cytoplasm. It carries out the reaction (R)-4'-phosphopantetheine + ATP + H(+) = 3'-dephospho-CoA + diphosphate. It functions in the pathway cofactor biosynthesis; coenzyme A biosynthesis; CoA from (R)-pantothenate: step 4/5. Functionally, reversibly transfers an adenylyl group from ATP to 4'-phosphopantetheine, yielding dephospho-CoA (dPCoA) and pyrophosphate. The polypeptide is Phosphopantetheine adenylyltransferase (Vibrio cholerae serotype O1 (strain ATCC 39541 / Classical Ogawa 395 / O395)).